A 334-amino-acid polypeptide reads, in one-letter code: Ornithine carbamoyltransferase, catabolic (334 aa).

Residues 57 to 60, Q84, R108, and 135 to 138 contribute to the carbamoyl phosphate site; these read STRT and HPTQ. L-ornithine is bound by residues N169, D233, and 237–238; that span reads SM. Carbamoyl phosphate is bound by residues 275–276 and R320; that span reads CL.

It belongs to the aspartate/ornithine carbamoyltransferase superfamily. OTCase family.

It localises to the cytoplasm. It carries out the reaction carbamoyl phosphate + L-ornithine = L-citrulline + phosphate + H(+). It functions in the pathway amino-acid degradation; L-arginine degradation via ADI pathway; carbamoyl phosphate from L-arginine: step 2/2. Functionally, reversibly catalyzes the transfer of the carbamoyl group from carbamoyl phosphate (CP) to the N(epsilon) atom of ornithine (ORN) to produce L-citrulline. The sequence is that of Ornithine carbamoyltransferase, catabolic (arcB) from Salmonella typhimurium (strain LT2 / SGSC1412 / ATCC 700720).